The sequence spans 330 residues: Aspartate--ammonia ligase (330 aa).

This sequence belongs to the class-II aminoacyl-tRNA synthetase family. AsnA subfamily.

The protein localises to the cytoplasm. The catalysed reaction is L-aspartate + NH4(+) + ATP = L-asparagine + AMP + diphosphate + H(+). It participates in amino-acid biosynthesis; L-asparagine biosynthesis; L-asparagine from L-aspartate (ammonia route): step 1/1. In Salmonella paratyphi A (strain ATCC 9150 / SARB42), this protein is Aspartate--ammonia ligase.